A 418-amino-acid chain; its full sequence is Probable serine/threonine-protein kinase nek2 (418 aa).

Residues 4–264 (YEILGALGKG…VNELLGYSFI (261 aa)) form the Protein kinase domain. Residues 10-18 (LGKGSFGVV) and K33 contribute to the ATP site. D135 (proton acceptor) is an active-site residue. The stretch at 278 to 363 (QGLKQMDEDL…SNLSLNCNNS (86 aa)) forms a coiled coil.

It belongs to the protein kinase superfamily. NEK Ser/Thr protein kinase family. NIMA subfamily.

The catalysed reaction is L-seryl-[protein] + ATP = O-phospho-L-seryl-[protein] + ADP + H(+). The enzyme catalyses L-threonyl-[protein] + ATP = O-phospho-L-threonyl-[protein] + ADP + H(+). Functionally, involved in centrosome biogenesis. Seems to be required for recruitment of centrosomal material and might be involved in de novo centrosome formation. The polypeptide is Probable serine/threonine-protein kinase nek2 (nek2) (Dictyostelium discoideum (Social amoeba)).